The following is a 151-amino-acid chain: Large ribosomal subunit protein uL15 (151 aa).

Residues 1 to 62 (MVKLNELFPK…GGQMPLYRRV (62 aa)) form a disordered region. Basic residues predominate over residues 11-20 (HGSRKAKRRI).

It belongs to the universal ribosomal protein uL15 family. As to quaternary structure, part of the 50S ribosomal subunit.

In terms of biological role, binds to the 23S rRNA. This is Large ribosomal subunit protein uL15 from Elusimicrobium minutum (strain Pei191).